A 159-amino-acid polypeptide reads, in one-letter code: Ribosomal RNA large subunit methyltransferase H (159 aa).

S-adenosyl-L-methionine-binding positions include Leu76, Gly108, and 127–132 (FGRLTL).

Belongs to the RNA methyltransferase RlmH family. In terms of assembly, homodimer.

It is found in the cytoplasm. The catalysed reaction is pseudouridine(1915) in 23S rRNA + S-adenosyl-L-methionine = N(3)-methylpseudouridine(1915) in 23S rRNA + S-adenosyl-L-homocysteine + H(+). Its function is as follows. Specifically methylates the pseudouridine at position 1915 (m3Psi1915) in 23S rRNA. This Listeria monocytogenes serotype 4b (strain CLIP80459) protein is Ribosomal RNA large subunit methyltransferase H.